A 298-amino-acid chain; its full sequence is GTP cyclohydrolase FolE2 (298 aa).

Belongs to the GTP cyclohydrolase IV family.

The catalysed reaction is GTP + H2O = 7,8-dihydroneopterin 3'-triphosphate + formate + H(+). The protein operates within cofactor biosynthesis; 7,8-dihydroneopterin triphosphate biosynthesis; 7,8-dihydroneopterin triphosphate from GTP: step 1/1. Converts GTP to 7,8-dihydroneopterin triphosphate. This chain is GTP cyclohydrolase FolE2, found in Pseudomonas paraeruginosa (strain DSM 24068 / PA7) (Pseudomonas aeruginosa (strain PA7)).